We begin with the raw amino-acid sequence, 473 residues long: Ras-GEF domain-containing family member 1B (473 aa).

Residues H34–L164 enclose the N-terminal Ras-GEF domain. A Ras-GEF domain is found at N204 to G452.

In terms of assembly, interacts with Ras family proteins. Interacts with CCDC124 during cytokinesis.

The protein resides in the early endosome. It is found in the late endosome. Its subcellular location is the midbody. Guanine nucleotide exchange factor (GEF) with specificity for RAP2A, it doesn't seems to activate other Ras family proteins (in vitro). This is Ras-GEF domain-containing family member 1B (RASGEF1B) from Homo sapiens (Human).